Consider the following 201-residue polypeptide: Recombination protein RecR (201 aa).

The C4-type zinc-finger motif lies at 58-73 (CEQCASITDTCPCRIC). Positions 81–178 (DKLCLVSEWD…ELSRLAQGIP (98 aa)) constitute a Toprim domain.

This sequence belongs to the RecR family.

In terms of biological role, may play a role in DNA repair. It seems to be involved in an RecBC-independent recombinational process of DNA repair. It may act with RecF and RecO. The polypeptide is Recombination protein RecR (Maridesulfovibrio salexigens (strain ATCC 14822 / DSM 2638 / NCIMB 8403 / VKM B-1763) (Desulfovibrio salexigens)).